A 440-amino-acid polypeptide reads, in one-letter code: Tyrosine--tRNA ligase (440 aa).

Tyr46 contacts L-tyrosine. The 'HIGH' region motif lies at 51–60; sequence PTAASLHIGN. 2 residues coordinate L-tyrosine: Tyr181 and Gln185. Positions 241-245 match the 'KMSKS' region motif; that stretch reads KFGKS. Lys244 serves as a coordination point for ATP. The region spanning 373-439 is the S4 RNA-binding domain; it reads DRVIDAAQAA…GKKALGAVEN (67 aa).

Belongs to the class-I aminoacyl-tRNA synthetase family. TyrS type 1 subfamily. In terms of assembly, homodimer.

The protein localises to the cytoplasm. It catalyses the reaction tRNA(Tyr) + L-tyrosine + ATP = L-tyrosyl-tRNA(Tyr) + AMP + diphosphate + H(+). Its function is as follows. Catalyzes the attachment of tyrosine to tRNA(Tyr) in a two-step reaction: tyrosine is first activated by ATP to form Tyr-AMP and then transferred to the acceptor end of tRNA(Tyr). In Bifidobacterium longum subsp. infantis (strain ATCC 15697 / DSM 20088 / JCM 1222 / NCTC 11817 / S12), this protein is Tyrosine--tRNA ligase.